Consider the following 4963-residue polypeptide: Kettin homolog (4963 aa).

3 Ig-like domains span residues 18–105, 133–220, and 303–392; these read PTFI…TCIL, PSAP…EAIS, and PIIR…ARIE. Disordered regions lie at residues 396–420, 466–501, 557–578, 598–622, and 652–696; these read LSVP…QQQQ, RRQL…EEER, IRPH…RQEV, QLYQ…QQRF, and TNGG…GHEH. Basic and acidic residues-rich tracts occupy residues 399 to 417, 466 to 475, and 484 to 501; these read PDER…RDRQ, RRQLEHEKRL, and FERE…EEER. Residues 401–517 are a coiled coil; the sequence is ERRKENQLRE…KHLRQQQQTQ (117 aa). Low complexity predominate over residues 557–576; that stretch reads IRPHQQQQQHYQQQQQSPRQ. The span at 658 to 685 shows a compositional bias: low complexity; it reads AANGSAKTANGSANGSANGSAVHAANGG. Ig-like domains lie at 706 to 796, 806 to 893, 937 to 1027, 1065 to 1155, 1199 to 1281, 1462 to 1554, 1594 to 1687, 1728 to 1819, 1992 to 2085, 2126 to 2217, 2258 to 2350, 2391 to 2481, 2522 to 2613, 2654 to 2745, 2787 to 2878, 2919 to 3010, 3051 to 3141, 3182 to 3273, 3314 to 3407, and 3448 to 3539; these read PQFL…FSLN, PEFT…GRVV, PKFE…ANIA, PNFH…ATII, FHCE…AELT, PKFL…ITVT, PPTF…ATIR, PAFV…VDIN, PPVF…IFLE, PTFT…CTVK, PKFV…ANFT, PQFI…AQLT, PKFV…GQLS, PSFV…ANVG, PQWV…ATVT, PNFL…ASIR, PAIT…ATLK, PRFI…ATIE, PAIV…FEVS, and PVFI…TKLT. Cys-827 and Cys-877 are disulfide-bonded. Cysteines 1201 and 1265 form a disulfide. Cys-1618 and Cys-1671 form a disulfide bridge. Disulfide bonds link Cys-2016-Cys-2069 and Cys-2148-Cys-2201. A compositionally biased stretch (basic and acidic residues) spans 3567–3583; sequence EAPRPAREDAPDADHGP. The interval 3567 to 3590 is disordered; sequence EAPRPAREDAPDADHGPPKFTSAL. Ig-like domains lie at 3584-3677, 3720-3811, 3821-3913, 3962-4052, and 4098-4185; these read PKFT…LKVV, PSFS…GKIA, PQVV…TKIT, PEFR…AKLA, and PQFT…ATLD. 2 cysteine pairs are disulfide-bonded: Cys-3606/Cys-3659 and Cys-3742/Cys-3795. Positions 4193–4963 are required for F-actin binding; sequence RQTKLRPANF…TSQAKLTLSR (771 aa). Basic and acidic residues predominate over residues 4319 to 4329; sequence DQQEVGWERPD. Residues 4319-4357 form a disordered region; sequence DQQEVGWERPDWAGQDGTSKLPGADEGRFKKLPTPAPEL. 4 consecutive Ig-like domains span residues 4546–4634, 4645–4733, 4752–4842, and 4872–4960; these read PTIS…ANLT, PDFS…ARLN, PRFT…LVLT, and PHFI…AKLT.

Interacts (via Ig-like domains) with F-actin. In terms of tissue distribution, expressed in the pharyngeal, body wall, and anal depressor muscles. Expression in these muscles is higher in hermaphrodites than in males. Expressed in the vulva and the myoepithelial sheath of the proximal ovary. Expressed in the proximal gonad of males. Not expressed in the dense bodies of the obliquely striated body wall muscle.

The protein resides in the cytoplasm. The protein localises to the myofibril. It localises to the sarcomere. It is found in the cytoskeleton. Positively regulates actin filament organization and provides mechanical stability to the myofibrils during body wall muscle contraction. Required for the organization of sarcomeric actin filaments and myosin protein myo-3 in striated body wall muscle cells. Not required for assembly of dense bodies, which are a type of integrin-based adhesion structure that link the plasma membrane to thin filaments of myofibrils, in body wall muscle. Not required for the atn-1 protein to localize to the dense bodies. This chain is Kettin homolog, found in Caenorhabditis elegans.